The chain runs to 294 residues: Octopine-binding periplasmic protein (294 aa).

The first 20 residues, 1–20, serve as a signal peptide directing secretion; sequence MRLKSIMCAALFVVAGQAAA. A disulfide bridge connects residues Cys-57 and Cys-64.

This sequence belongs to the bacterial solute-binding protein 3 family.

The protein resides in the periplasm. Functionally, component of the octopine active transport system probably consisting of four subunits: Q, M, P and T. This Rhizobium meliloti (Ensifer meliloti) protein is Octopine-binding periplasmic protein (occT).